Consider the following 988-residue polypeptide: MESQTGRKSARRLSMTKKKSQSVCPIKERTSNGGAASITSFFRNTPPSKLACPLCGKLVPRYKINEHIDSQCQNFLVEDDGKQKEITKAPSNSALASNNEREKSPGDKDADTSPFFKKNCAVRRDSSETDSQAKPVKTVGLGSLSSKLSRRALRLSDESGVNLTRVSDNEKDHNADLNRSQKENCMNSLTFGSERNGTDADNILETEPEASNQPQLKNVEKSASDSSISSDVHTSSSSVLKRKSMEIPKNDTNTTETCIAHKKSRFFQSSIERGDESKVKSDQTEASSSAYDVPTSKSPIKSKTTQEEIEKELNKTPANEHNMLDVEKVGEGSEQQPTRLPYYLRNFRTVLEAVLENEDDRRLFNEDDFSTIQSFQQLSVPGQMLYVRLFQRKLKWLQVCKVEYTEISTDLRPVVQELVACGFLQTESELHDLHEVLDLLPAPELRNLAKTFHLGRGGSQKQQLVEGLLQLGKQRSLFAGQNNTAAVILKRAKQAAGSCVRLCRSSRVVFSRVLLLFTLTDTLEEEDLASGGQGQLYTILLVNSGRLAFPEYTVHRSARLFKDRDDLIRYETAMRALQEVIAAMQSGSWEDAYDLYTTAMAAWQEIKDSCDLSHQEQLPVFLRCFTVGWTYTRILSRGVEILQRLKRYEDAVEQLRNLLSQSVYCVDSRGRWWDRLALNLQQHLKQHEQAIGAIRDGLNDPLARTGHKLSLYQRASRMKESASLKKYRLLLRDLPTVHVQDVTHVTIRGQLFPHEGGMGKSVFLRAASEDEGSGGGQGTVLMCSVEDLALEHYRTLGFDQGIHGEGSTFSTLFGLLMWDIIFMDGVPDVFLNPYQTCPLDLHTDCFYGSRREAIEARAEMLREASVETLQDLIADVWSTQEGRVCALINWERFSTPQQAQSLVACLGGHFLSGVFLRMAKDYRHCRGGLPDLVVWSTSSNKYKLVEVKGPNDRLSQKQQIWLDELRKLGADVEVCHVTATGARGARRE.

The segment at 1–39 (MESQTGRKSARRLSMTKKKSQSVCPIKERTSNGGAASIT) is disordered. The span at 8-20 (KSARRLSMTKKKS) shows a compositional bias: basic residues. A UBZ4-type zinc finger spans residues 49 to 77 (KLACPLCGKLVPRYKINEHIDSQCQNFLV). The Zn(2+) site is built by Cys-52, Cys-55, His-67, and Cys-72. Disordered regions lie at residues 87 to 115 (TKAP…TSPF), 164 to 256 (TRVS…NTTE), and 269 to 307 (SSIE…TTQE). The span at 89–98 (APSNSALASN) shows a compositional bias: polar residues. 2 stretches are compositionally biased toward basic and acidic residues: residues 99-111 (NERE…KDAD) and 167-182 (SDNE…RSQK). The span at 183–195 (ENCMNSLTFGSER) shows a compositional bias: polar residues. The span at 224–238 (SDSSISSDVHTSSSS) shows a compositional bias: low complexity. A compositionally biased stretch (basic and acidic residues) spans 272-283 (ERGDESKVKSDQ). The segment covering 284 to 303 (TEASSSAYDVPTSKSPIKSK) has biased composition (polar residues). Residues 636 to 663 (SRGVEILQRLKRYEDAVEQLRNLLSQSV) adopt a coiled-coil conformation. Mn(2+) is bound by residues Glu-805, Asp-931, Glu-946, and Val-947. The VRR-NUC domain maps to 866-978 (VETLQDLIAD…GADVEVCHVT (113 aa)).

It belongs to the FAN1 family. In terms of assembly, interacts with fancd2 (when monoubiquitinated). Mn(2+) is required as a cofactor. It depends on Mg(2+) as a cofactor.

The protein resides in the nucleus. It catalyses the reaction Hydrolytically removes 5'-nucleotides successively from the 3'-hydroxy termini of 3'-hydroxy-terminated oligonucleotides.. Nuclease required for the repair of DNA interstrand cross-links (ICL) recruited at sites of DNA damage by monoubiquitinated FANCD2. Specifically involved in repair of ICL-induced DNA breaks by being required for efficient homologous recombination, probably in the resolution of homologous recombination intermediates. Acts as a 5'-3' exonuclease that anchors at a cut end of DNA and cleaves DNA successively at every third nucleotide, allowing to excise an ICL from one strand through flanking incisions. Probably keeps excising with 3'-flap annealing until it reaches and unhooks the ICL. Acts at sites that have a 5'-terminal phosphate anchor at a nick or a 1- or 2-nucleotide flap and is augmented by a 3' flap. Also has endonuclease activity toward 5'-flaps. The chain is Fanconi-associated nuclease 1 (fan1) from Danio rerio (Zebrafish).